The sequence spans 205 residues: Holliday junction branch migration complex subunit RuvA (205 aa).

The interval 1–64 is domain I; it reads MIGRLRGLLV…EDAQLLYGFI (64 aa). The interval 65-143 is domain II; it reads TKQERALFRL…SLMEASHGNE (79 aa). The segment at 144–156 is flexible linker; sequence REFVLQSNYTPAP. Positions 157-205 are domain III; it reads VVNTAEEDAISALLALGYKPAQASKAVSSVFEEGMDSETLIKASLKSML.

The protein belongs to the RuvA family. Homotetramer. Forms an RuvA(8)-RuvB(12)-Holliday junction (HJ) complex. HJ DNA is sandwiched between 2 RuvA tetramers; dsDNA enters through RuvA and exits via RuvB. An RuvB hexamer assembles on each DNA strand where it exits the tetramer. Each RuvB hexamer is contacted by two RuvA subunits (via domain III) on 2 adjacent RuvB subunits; this complex drives branch migration. In the full resolvosome a probable DNA-RuvA(4)-RuvB(12)-RuvC(2) complex forms which resolves the HJ.

Its subcellular location is the cytoplasm. Functionally, the RuvA-RuvB-RuvC complex processes Holliday junction (HJ) DNA during genetic recombination and DNA repair, while the RuvA-RuvB complex plays an important role in the rescue of blocked DNA replication forks via replication fork reversal (RFR). RuvA specifically binds to HJ cruciform DNA, conferring on it an open structure. The RuvB hexamer acts as an ATP-dependent pump, pulling dsDNA into and through the RuvAB complex. HJ branch migration allows RuvC to scan DNA until it finds its consensus sequence, where it cleaves and resolves the cruciform DNA. The chain is Holliday junction branch migration complex subunit RuvA from Shewanella loihica (strain ATCC BAA-1088 / PV-4).